The sequence spans 1775 residues: ATP-dependent RNA helicase DEAH12, chloroplastic (1775 aa).

The N-terminal 33 residues, 1–33 (MRNSFPPSDGGRSATDRRQQSSHSSSTNRYNSR), are a transit peptide targeting the chloroplast. The disordered stretch occupies residues 1–77 (MRNSFPPSDG…NPSSGYSPPV (77 aa)). A compositionally biased stretch (low complexity) spans 21-34 (SSHSSSTNRYNSRS). Polar residues predominate over residues 35-60 (AQSSPPLNHRPTWNQQHSQYPNSNFP). A Helicase ATP-binding domain is found at 316–480 (LKKIHREQIM…FFSCGILLVN (165 aa)). 329 to 336 (GETGSGKS) serves as a coordination point for ATP. The DEAH box motif lies at 427–430 (DEAH). A Helicase C-terminal domain is found at 510 to 676 (DVVKMAVEIH…VALLRMLALG (167 aa)). Residues 1560-1767 (IEVECPICLS…EPCYAHLRTI (208 aa)) are TRIAD supradomain. Zn(2+) is bound by residues Cys-1564, Cys-1567, Cys-1580, His-1582, Cys-1585, Cys-1588, Cys-1607, Cys-1612, Cys-1652, Cys-1657, Cys-1675, Cys-1678, Cys-1683, Cys-1686, His-1691, Cys-1696, Cys-1722, and Cys-1725. Residues 1564–1612 (CPICLSEVDDGYSLEGCSHLFCKACLLEQFEASMRNFDAFPILCSHIDC) form an RING-type 1 zinc finger. The segment at 1631–1696 (DELFSASLSS…HLEYHPLITC (66 aa)) adopts an IBR-type zinc-finger fold. The segment at 1722–1750 (CPICKSTIEKTDGCNHMKCRCGKHICWTC) adopts an RING-type 2; atypical zinc-finger fold. The active site involves Cys-1735. The Zn(2+) site is built by Cys-1740 and Cys-1742.

This sequence belongs to the DEAD box helicase family. DEAH subfamily.

The protein resides in the plastid. The protein localises to the chloroplast. It carries out the reaction ATP + H2O = ADP + phosphate + H(+). This chain is ATP-dependent RNA helicase DEAH12, chloroplastic, found in Arabidopsis thaliana (Mouse-ear cress).